The primary structure comprises 306 residues: Methionyl-tRNA formyltransferase (306 aa).

110–113 (SLLP) serves as a coordination point for (6S)-5,6,7,8-tetrahydrofolate.

Belongs to the Fmt family.

It carries out the reaction L-methionyl-tRNA(fMet) + (6R)-10-formyltetrahydrofolate = N-formyl-L-methionyl-tRNA(fMet) + (6S)-5,6,7,8-tetrahydrofolate + H(+). Functionally, attaches a formyl group to the free amino group of methionyl-tRNA(fMet). The formyl group appears to play a dual role in the initiator identity of N-formylmethionyl-tRNA by promoting its recognition by IF2 and preventing the misappropriation of this tRNA by the elongation apparatus. The protein is Methionyl-tRNA formyltransferase of Brucella anthropi (strain ATCC 49188 / DSM 6882 / CCUG 24695 / JCM 21032 / LMG 3331 / NBRC 15819 / NCTC 12168 / Alc 37) (Ochrobactrum anthropi).